Reading from the N-terminus, the 390-residue chain is 8-amino-7-oxononanoate synthase (390 aa).

Arg-19 is a substrate binding site. Residue 106 to 107 (GY) participates in pyridoxal 5'-phosphate binding. A substrate-binding site is contributed by His-131. 3 residues coordinate pyridoxal 5'-phosphate: Ser-176, His-204, and Thr-233. Lys-236 bears the N6-(pyridoxal phosphate)lysine mark. Thr-350 lines the substrate pocket.

It belongs to the class-II pyridoxal-phosphate-dependent aminotransferase family. BioF subfamily. Homodimer. It depends on pyridoxal 5'-phosphate as a cofactor.

The enzyme catalyses 6-carboxyhexanoyl-[ACP] + L-alanine + H(+) = (8S)-8-amino-7-oxononanoate + holo-[ACP] + CO2. It participates in cofactor biosynthesis; biotin biosynthesis. Its function is as follows. Catalyzes the decarboxylative condensation of pimeloyl-[acyl-carrier protein] and L-alanine to produce 8-amino-7-oxononanoate (AON), [acyl-carrier protein], and carbon dioxide. In Pseudomonas entomophila (strain L48), this protein is 8-amino-7-oxononanoate synthase.